Here is a 270-residue protein sequence, read N- to C-terminus: MFAPGHITGFFVICKSSNKLKTGSIGAGITIDRGVNVELKEGNGSIFYNNKKVNICAVEKVIEHYKKFGYNDDYDIIFSSDFPLGSGLGMSGGCALILAKKLNEMLNLNENYAEIAHISEVECGTGLGDVIAQYVKGFVIRKTPGFPINVEKIVVDDDYYIIIEIFGKKETKEIITNDIWIKKINEYGERCLNELLKNPTLENFVNLSYEFAVNTGLINEKILSICEDLKFTVGASQSMLGNTLFCISKKETLEDALSILKNPIVCNIYY.

This sequence belongs to the GHMP kinase family. PoK subfamily.

It carries out the reaction (R)-pantoate + ATP = (R)-4-phosphopantoate + ADP + H(+). The protein operates within cofactor biosynthesis; coenzyme A biosynthesis. Functionally, phosphorylates (R)-pantoate to form (R)-4-phosphopantoate in the CoA biosynthesis pathway. The protein is Pantoate kinase of Methanocaldococcus jannaschii (strain ATCC 43067 / DSM 2661 / JAL-1 / JCM 10045 / NBRC 100440) (Methanococcus jannaschii).